The sequence spans 164 residues: HTH-type transcriptional regulator IscR (164 aa).

An HTH rrf2-type domain is found at 2-131; that stretch reads RLTSKGRYAV…NNITLDELVN (130 aa). A DNA-binding region (H-T-H motif) is located at residues 28–51; that stretch reads LADISERQGISLSYLEQLFSRLRK. [2Fe-2S] cluster-binding residues include C92, C98, and C104.

It depends on [2Fe-2S] cluster as a cofactor.

In terms of biological role, regulates the transcription of several operons and genes involved in the biogenesis of Fe-S clusters and Fe-S-containing proteins. The chain is HTH-type transcriptional regulator IscR from Pectobacterium carotovorum subsp. carotovorum (strain PC1).